The following is a 370-amino-acid chain: Anhydro-N-acetylmuramic acid kinase (370 aa).

13–20 provides a ligand contact to ATP; it reads GTSMDGVD.

The protein belongs to the anhydro-N-acetylmuramic acid kinase family.

The catalysed reaction is 1,6-anhydro-N-acetyl-beta-muramate + ATP + H2O = N-acetyl-D-muramate 6-phosphate + ADP + H(+). Its pathway is amino-sugar metabolism; 1,6-anhydro-N-acetylmuramate degradation. The protein operates within cell wall biogenesis; peptidoglycan recycling. Functionally, catalyzes the specific phosphorylation of 1,6-anhydro-N-acetylmuramic acid (anhMurNAc) with the simultaneous cleavage of the 1,6-anhydro ring, generating MurNAc-6-P. Is required for the utilization of anhMurNAc either imported from the medium or derived from its own cell wall murein, and thus plays a role in cell wall recycling. The protein is Anhydro-N-acetylmuramic acid kinase of Vibrio parahaemolyticus serotype O3:K6 (strain RIMD 2210633).